The sequence spans 302 residues: Forkhead box protein R2 (302 aa).

Positions 183 to 285 (RPPLNYSHLV…RVLAYARRES (103 aa)) form a DNA-binding region, fork-head.

The protein localises to the nucleus. The protein is Forkhead box protein R2 (Foxr2) of Mus musculus (Mouse).